A 136-amino-acid chain; its full sequence is ATP synthase F(0) complex subunit C1, mitochondrial (136 aa).

The transit peptide at 1–61 directs the protein to the mitochondrion; sequence MQTTGALLIS…REFQTSVVSR (61 aa). Residues 77–97 traverse the membrane as a helical segment; sequence VGVAGSGAGIGTVFGSLIIGY. Lys104 carries the post-translational modification N6,N6,N6-trimethyllysine. A helical membrane pass occupies residues 112–132; it reads ILGFALSEAMGLFCLMVAFLI.

This sequence belongs to the ATPase C chain family. As to quaternary structure, homooctamer; the c-ring consists of eight c subunits forming a circle, and each subunit adopts a hairpin shape. Component of the ATP synthase complex composed at least of ATP5F1A/subunit alpha, ATP5F1B/subunit beta, ATP5MC1/subunit c (homooctomer), MT-ATP6/subunit a, MT-ATP8/subunit 8, ATP5ME/subunit e, ATP5MF/subunit f, ATP5MG/subunit g, ATP5MK/subunit k, ATP5MJ/subunit j, ATP5F1C/subunit gamma, ATP5F1D/subunit delta, ATP5F1E/subunit epsilon, ATP5PF/subunit F6, ATP5PB/subunit b, ATP5PD/subunit d, ATP5PO/subunit OSCP. ATP synthase complex consists of a soluble F(1) head domain (subunits alpha(3) and beta(3)) - the catalytic core - and a membrane F(0) domain - the membrane proton channel (subunits c, a, 8, e, f, g, k and j). These two domains are linked by a central stalk (subunits gamma, delta, and epsilon) rotating inside the F1 region and a stationary peripheral stalk (subunits F6, b, d, and OSCP). Interacts with TMEM70 (homooligomer form); this interaction facilitates the oligomer formation of subunit c/ATP5MC1 (c-ring) and the c-ring membrane insertion and also protects ATP5MC1 against intramitochondrial proteolysis. Post-translationally, trimethylated by ATPSCKMT at Lys-104. Methylation is required for proper incorporation of the C subunit into the ATP synthase complex and mitochondrial respiration.

Its subcellular location is the mitochondrion membrane. The enzyme catalyses H(+)(in) = H(+)(out). In terms of biological role, subunit c, of the mitochondrial membrane ATP synthase complex (F(1)F(0) ATP synthase or Complex V) that produces ATP from ADP in the presence of a proton gradient across the membrane which is generated by electron transport complexes of the respiratory chain. ATP synthase complex consist of a soluble F(1) head domain - the catalytic core - and a membrane F(1) domain - the membrane proton channel. These two domains are linked by a central stalk rotating inside the F(1) region and a stationary peripheral stalk. During catalysis, ATP synthesis in the catalytic domain of F(1) is coupled via a rotary mechanism of the central stalk subunits to proton translocation. With the subunit a (MT-ATP6), forms the proton-conducting channel in the F(0) domain, that contains two crucial half-channels (inlet and outlet) that facilitate proton movement from the mitochondrial intermembrane space (IMS) into the matrix. Protons are taken up via the inlet half-channel and released through the outlet half-channel, following a Grotthuss mechanism. This chain is ATP synthase F(0) complex subunit C1, mitochondrial, found in Ovis aries (Sheep).